The primary structure comprises 142 residues: Sec-independent protein translocase protein TatB (142 aa).

The helical transmembrane segment at 1 to 21 (MFDIGASELLVLVIVAIVVIG) threads the bilayer. The tract at residues 75–142 (RETAAQETAA…PAARPGSQQP (68 aa)) is disordered. The span at 76 to 94 (ETAAQETAAAQGQTPAAAE) shows a compositional bias: low complexity. The span at 123-133 (AKVEARVEEAP) shows a compositional bias: basic and acidic residues.

This sequence belongs to the TatB family. As to quaternary structure, the Tat system comprises two distinct complexes: a TatABC complex, containing multiple copies of TatA, TatB and TatC subunits, and a separate TatA complex, containing only TatA subunits. Substrates initially bind to the TatABC complex, which probably triggers association of the separate TatA complex to form the active translocon.

Its subcellular location is the cell inner membrane. In terms of biological role, part of the twin-arginine translocation (Tat) system that transports large folded proteins containing a characteristic twin-arginine motif in their signal peptide across membranes. Together with TatC, TatB is part of a receptor directly interacting with Tat signal peptides. TatB may form an oligomeric binding site that transiently accommodates folded Tat precursor proteins before their translocation. The chain is Sec-independent protein translocase protein TatB from Novosphingobium aromaticivorans (strain ATCC 700278 / DSM 12444 / CCUG 56034 / CIP 105152 / NBRC 16084 / F199).